The following is a 459-amino-acid chain: Cysteine--tRNA ligase (459 aa).

Zn(2+) is bound at residue C31. The 'HIGH' region signature appears at 33–43; the sequence is PTVYYNPHIGN. Positions 216, 241, and 245 each coordinate Zn(2+). A 'KMSKS' region motif is present at residues 274 to 278; it reads KMSKS. K277 serves as a coordination point for ATP.

The protein belongs to the class-I aminoacyl-tRNA synthetase family. In terms of assembly, monomer. Zn(2+) serves as cofactor.

The protein localises to the cytoplasm. It catalyses the reaction tRNA(Cys) + L-cysteine + ATP = L-cysteinyl-tRNA(Cys) + AMP + diphosphate. The chain is Cysteine--tRNA ligase from Rickettsia conorii (strain ATCC VR-613 / Malish 7).